The following is a 609-amino-acid chain: MAAMDPRNNGNVAPLNERERAENLEVREVVEVQDDQSVVSLMSNDSDLQKKMMKKEEKKNGGWTNAIILLVNQGLATLAFFGVGVNLVLFLTRVMGQGNAEAANNVSKWTGTVYMFSLVGAFLSDSYWGRYLTCTIFQVIFVIGVGLLSFVSWFFLIKPRGCGDGDLECNPPSSLGVAIFYLSVYLVAFGYGGHQPTLATFGADQLDDDKNSKAAFFSYFYFALNVGALFSNTILVYFEDKGLWTEGFLVSLGSAIVALVAFLAPTRQYRYVKPCGNPLPRVAQVFVATARKWSVVRPGDPHELYELEGPESAIKGSRKIFHSTKFLFLDRAAVITENDRNGTRSNAWRLCSVTQVEEAKCVMKLLPIWLCTIIYSVIFTQMASLFVEQGDVMNAYVGKFHIPAASMSVFDIFSVFVSTGIYRHIIFPYVRPTELMRMGIGLIIGIMAMVAAGLTEIQRLKRVVPGQKESELTILWQIPQYVLVGASEVFMYVGQLEFFNGQAPDGLKNLGSSLCMASMALGNYVSSLMVNIVMAITKRGENSPGWIPENLNEGHMDRFYFLIAALAAIDFVVYLIFAKWYQPISHDEDSIKGGSGGSLKKTVSELEQV.

2 helical membrane-spanning segments follow: residues 67–87 and 109–129; these read IILLVNQGLATLAFFGVGVNL and WTGTVYMFSLVGAFLSDSYWG. At Thr133 the chain carries Phosphothreonine. Transmembrane regions (helical) follow at residues 136 to 156, 173 to 193, 216 to 236, 243 to 263, 367 to 387, 402 to 422, 438 to 458, 474 to 494, 516 to 536, and 559 to 579; these read IFQVIFVIGVGLLSFVSWFFL, SSLGVAIFYLSVYLVAFGYGG, FFSYFYFALNVGALFSNTILV, LWTEGFLVSLGSAIVALVAFL, PIWLCTIIYSVIFTQMASLFV, IPAASMSVFDIFSVFVSTGIY, MGIGLIIGIMAMVAAGLTEIQ, ILWQIPQYVLVGASEVFMYVG, MASMALGNYVSSLMVNIVMAI, and FYFLIAALAAIDFVVYLIFAK.

This sequence belongs to the major facilitator superfamily. Proton-dependent oligopeptide transporter (POT/PTR) (TC 2.A.17) family. As to expression, expressed in flowers.

It localises to the membrane. The protein is Protein NRT1/ PTR FAMILY 7.1 (NPF7.1) of Arabidopsis thaliana (Mouse-ear cress).